The following is a 349-amino-acid chain: Protein RecA (349 aa).

Position 69-76 (69-76 (GPESSGKT)) interacts with ATP.

The protein belongs to the RecA family.

Its subcellular location is the cytoplasm. Its function is as follows. Can catalyze the hydrolysis of ATP in the presence of single-stranded DNA, the ATP-dependent uptake of single-stranded DNA by duplex DNA, and the ATP-dependent hybridization of homologous single-stranded DNAs. It interacts with LexA causing its activation and leading to its autocatalytic cleavage. The protein is Protein RecA of Crocosphaera subtropica (strain ATCC 51142 / BH68) (Cyanothece sp. (strain ATCC 51142)).